The following is a 594-amino-acid chain: CDPK-related kinase 4 (594 aa).

Positions 1-131 (MGHCYSRNIS…DSGGGERLDK (131 aa)) are disordered. Glycine 2 is lipidated: N-myristoyl glycine. Residues 37–58 (IPQSPVASGTPEVNSYNISPFQ) show a composition bias toward polar residues. Residues 116–131 (VVDHGGDSGGGERLDK) show a composition bias toward basic and acidic residues. Residues 143 to 405 (YELGKEVGRG…AAQALAHPWL (263 aa)) form the Protein kinase domain. ATP contacts are provided by residues 149-157 (VGRGHFGHT) and lysine 175. Aspartate 271 serves as the catalytic Proton acceptor. A Phosphoserine modification is found at serine 311. The tract at residues 409 to 439 (NPGLLLDFSVYKLVKSYIRASPFRRSALKAL) is autoinhibitory domain. The tract at residues 428-448 (ASPFRRSALKALSKAIPDEEL) is calmodulin binding (CaMBD). EF-hand domains follow at residues 446–481 (EELVFLKAQFMLLDPKDGGLSLNCFTMALTRYATDA), 482–517 (MMESRLPDILNTMQPLAQKKLDFEEFCAAAVSVYQL), 518–557 (EALEEWEQIATSAFEHFEHEGNRIISVQELAGEMSVGPSA), and 558–587 (YPLLKDWIRSSDGKLSFLGYAKFLHGVTVR). Residues aspartate 462, lysine 501, glutamate 506, asparagine 539, glutamate 546, serine 567, aspartate 569, and lysine 571 each coordinate Ca(2+). A Phosphoserine modification is found at serine 573.

This sequence belongs to the protein kinase superfamily. Ser/Thr protein kinase family. CDPK subfamily. Binds calmodulin (CaM) in a calcium-dependent manner. Autophosphorylated.

The protein localises to the cell membrane. The enzyme catalyses L-seryl-[protein] + ATP = O-phospho-L-seryl-[protein] + ADP + H(+). It carries out the reaction L-threonyl-[protein] + ATP = O-phospho-L-threonyl-[protein] + ADP + H(+). Activated by calcium and calmodulin. Autophosphorylation may play an important role in the regulation of the kinase activity. In terms of biological role, may play a role in signal transduction pathways that involve calcium as a second messenger. In Arabidopsis thaliana (Mouse-ear cress), this protein is CDPK-related kinase 4 (CRK4).